A 38-amino-acid chain; its full sequence is Large ribosomal subunit protein bL36 (38 aa).

The protein belongs to the bacterial ribosomal protein bL36 family.

The chain is Large ribosomal subunit protein bL36 from Prochlorococcus marinus (strain MIT 9312).